We begin with the raw amino-acid sequence, 453 residues long: Bifunctional protein GlmU (453 aa).

Positions 1–226 are pyrophosphorylase; the sequence is MSLNVVILAA…AMEVEGANNR (226 aa). UDP-N-acetyl-alpha-D-glucosamine is bound by residues 8–11, K22, Q73, 78–79, 100–102, G137, E151, N166, and N224; these read LAAG, GT, and YGD. Residue D102 coordinates Mg(2+). N224 provides a ligand contact to Mg(2+). The linker stretch occupies residues 227–247; that stretch reads VQLAQLERSYQKMQAERLMIA. Positions 248–453 are N-acetyltransferase; that stretch reads GATLIDPARF…QNWARPVKKK (206 aa). R330 and K348 together coordinate UDP-N-acetyl-alpha-D-glucosamine. H360 serves as the catalytic Proton acceptor. Residues Y363 and N374 each contribute to the UDP-N-acetyl-alpha-D-glucosamine site. Residues A377, 383 to 384, S402, A420, and R437 contribute to the acetyl-CoA site; that span reads NY.

The protein in the N-terminal section; belongs to the N-acetylglucosamine-1-phosphate uridyltransferase family. This sequence in the C-terminal section; belongs to the transferase hexapeptide repeat family. As to quaternary structure, homotrimer. The cofactor is Mg(2+).

The protein localises to the cytoplasm. The catalysed reaction is alpha-D-glucosamine 1-phosphate + acetyl-CoA = N-acetyl-alpha-D-glucosamine 1-phosphate + CoA + H(+). It catalyses the reaction N-acetyl-alpha-D-glucosamine 1-phosphate + UTP + H(+) = UDP-N-acetyl-alpha-D-glucosamine + diphosphate. It participates in nucleotide-sugar biosynthesis; UDP-N-acetyl-alpha-D-glucosamine biosynthesis; N-acetyl-alpha-D-glucosamine 1-phosphate from alpha-D-glucosamine 6-phosphate (route II): step 2/2. It functions in the pathway nucleotide-sugar biosynthesis; UDP-N-acetyl-alpha-D-glucosamine biosynthesis; UDP-N-acetyl-alpha-D-glucosamine from N-acetyl-alpha-D-glucosamine 1-phosphate: step 1/1. Its pathway is bacterial outer membrane biogenesis; LPS lipid A biosynthesis. In terms of biological role, catalyzes the last two sequential reactions in the de novo biosynthetic pathway for UDP-N-acetylglucosamine (UDP-GlcNAc). The C-terminal domain catalyzes the transfer of acetyl group from acetyl coenzyme A to glucosamine-1-phosphate (GlcN-1-P) to produce N-acetylglucosamine-1-phosphate (GlcNAc-1-P), which is converted into UDP-GlcNAc by the transfer of uridine 5-monophosphate (from uridine 5-triphosphate), a reaction catalyzed by the N-terminal domain. This chain is Bifunctional protein GlmU, found in Aeromonas hydrophila subsp. hydrophila (strain ATCC 7966 / DSM 30187 / BCRC 13018 / CCUG 14551 / JCM 1027 / KCTC 2358 / NCIMB 9240 / NCTC 8049).